The primary structure comprises 305 residues: Methionyl-tRNA formyltransferase (305 aa).

Ser-108–Pro-111 is a binding site for (6S)-5,6,7,8-tetrahydrofolate.

Belongs to the Fmt family.

It catalyses the reaction L-methionyl-tRNA(fMet) + (6R)-10-formyltetrahydrofolate = N-formyl-L-methionyl-tRNA(fMet) + (6S)-5,6,7,8-tetrahydrofolate + H(+). Functionally, attaches a formyl group to the free amino group of methionyl-tRNA(fMet). The formyl group appears to play a dual role in the initiator identity of N-formylmethionyl-tRNA by promoting its recognition by IF2 and preventing the misappropriation of this tRNA by the elongation apparatus. In Thermus thermophilus (strain ATCC 27634 / DSM 579 / HB8), this protein is Methionyl-tRNA formyltransferase.